Reading from the N-terminus, the 299-residue chain is Sugar transporter SWEET1 (299 aa).

In terms of domain architecture, MtN3/slv 1 spans 7–91; sequence QVLSISAITT…CVFFLIYSLP (85 aa). Helical transmembrane passes span 8 to 28, 36 to 56, 67 to 87, 95 to 115, 124 to 144, 155 to 175, and 180 to 200; these read VLSI…IPIC, AVGD…SFWL, MIIV…FFLI, FTCQ…WIAL, VICM…LGVV, LPMC…GNLV, and IIIP…LFVV. Positions 121 to 205 constitute a MtN3/slv 2 domain; that stretch reads YLGVICMTFN…ALFVVLPIRE (85 aa). The segment at 230-299 is disordered; the sequence is RGDCIVSSPP…DPDLSSIQSP (70 aa). A compositionally biased stretch (basic and acidic residues) spans 247–261; it reads NETRSDVEDKFDKLM. A compositionally biased stretch (low complexity) spans 276-299; that stretch reads SMGSPPSYKSRSSSDPDLSSIQSP.

The protein belongs to the SWEET sugar transporter family.

Its subcellular location is the golgi apparatus membrane. The protein localises to the cell membrane. Its function is as follows. Mediates both low-affinity uptake and efflux of sugar across the membrane. The sequence is that of Sugar transporter SWEET1 (swt-1) from Caenorhabditis elegans.